Consider the following 384-residue polypeptide: 1-deoxy-D-xylulose 5-phosphate reductoisomerase (384 aa).

The NADPH site is built by Thr11, Gly12, Ser13, Ile14, Lys38, and Asn123. Lys124 lines the 1-deoxy-D-xylulose 5-phosphate pocket. Glu125 lines the NADPH pocket. Asp148 provides a ligand contact to Mn(2+). Positions 149, 150, 174, and 197 each coordinate 1-deoxy-D-xylulose 5-phosphate. Glu150 serves as a coordination point for Mn(2+). Gly203 contributes to the NADPH binding site. 1-deoxy-D-xylulose 5-phosphate-binding residues include Ser210, Asn215, Lys216, and Glu219. Glu219 is a Mn(2+) binding site.

The protein belongs to the DXR family. Mg(2+) serves as cofactor. It depends on Mn(2+) as a cofactor.

It carries out the reaction 2-C-methyl-D-erythritol 4-phosphate + NADP(+) = 1-deoxy-D-xylulose 5-phosphate + NADPH + H(+). It functions in the pathway isoprenoid biosynthesis; isopentenyl diphosphate biosynthesis via DXP pathway; isopentenyl diphosphate from 1-deoxy-D-xylulose 5-phosphate: step 1/6. Its function is as follows. Catalyzes the NADPH-dependent rearrangement and reduction of 1-deoxy-D-xylulose-5-phosphate (DXP) to 2-C-methyl-D-erythritol 4-phosphate (MEP). The protein is 1-deoxy-D-xylulose 5-phosphate reductoisomerase of Halothermothrix orenii (strain H 168 / OCM 544 / DSM 9562).